The chain runs to 239 residues: Dephospho-CoA kinase (239 aa).

Residues 3-206 form the DPCK domain; it reads IIGLTGSIAS…GGEGGEPAAG (204 aa). Position 11 to 16 (11 to 16) interacts with ATP; it reads ASGKST. The disordered stretch occupies residues 197-239; that stretch reads GGEGGEPAAGSSAHHGAGSVDPGAGPCDGPGAAPEAERRGGDR. Low complexity predominate over residues 204 to 230; that stretch reads AAGSSAHHGAGSVDPGAGPCDGPGAAP.

This sequence belongs to the CoaE family.

Its subcellular location is the cytoplasm. The catalysed reaction is 3'-dephospho-CoA + ATP = ADP + CoA + H(+). It functions in the pathway cofactor biosynthesis; coenzyme A biosynthesis; CoA from (R)-pantothenate: step 5/5. In terms of biological role, catalyzes the phosphorylation of the 3'-hydroxyl group of dephosphocoenzyme A to form coenzyme A. This Symbiobacterium thermophilum (strain DSM 24528 / JCM 14929 / IAM 14863 / T) protein is Dephospho-CoA kinase.